Consider the following 292-residue polypeptide: Ribosomal RNA small subunit methyltransferase A (292 aa).

N46, L48, G73, E94, D118, and N136 together coordinate S-adenosyl-L-methionine.

This sequence belongs to the class I-like SAM-binding methyltransferase superfamily. rRNA adenine N(6)-methyltransferase family. RsmA subfamily.

Its subcellular location is the cytoplasm. The catalysed reaction is adenosine(1518)/adenosine(1519) in 16S rRNA + 4 S-adenosyl-L-methionine = N(6)-dimethyladenosine(1518)/N(6)-dimethyladenosine(1519) in 16S rRNA + 4 S-adenosyl-L-homocysteine + 4 H(+). Specifically dimethylates two adjacent adenosines (A1518 and A1519) in the loop of a conserved hairpin near the 3'-end of 16S rRNA in the 30S particle. May play a critical role in biogenesis of 30S subunits. The sequence is that of Ribosomal RNA small subunit methyltransferase A from Deinococcus radiodurans (strain ATCC 13939 / DSM 20539 / JCM 16871 / CCUG 27074 / LMG 4051 / NBRC 15346 / NCIMB 9279 / VKM B-1422 / R1).